Consider the following 166-residue polypeptide: Deglycase PH1704 (166 aa).

In terms of domain architecture, PfpI endopeptidase spans 1–166 (MKVLFLTANE…WMREFVKLLK (166 aa)). The active-site Nucleophile is the cysteine 100. The active site involves histidine 101.

Belongs to the peptidase C56 family. In terms of assembly, homohexamer formed by a dimer of trimers that assemble into a hollow ring structure.

The protein localises to the cytoplasm. The enzyme catalyses N(omega)-(1-hydroxy-2-oxopropyl)-L-arginyl-[protein] + H2O = lactate + L-arginyl-[protein] + H(+). It catalyses the reaction N(6)-(1-hydroxy-2-oxopropyl)-L-lysyl-[protein] + H2O = lactate + L-lysyl-[protein] + H(+). The catalysed reaction is S-(1-hydroxy-2-oxopropyl)-L-cysteinyl-[protein] + H2O = lactate + L-cysteinyl-[protein] + H(+). It carries out the reaction N(omega)-(1-hydroxy-2-oxoethyl)-L-arginyl-[protein] + H2O = L-arginyl-[protein] + glycolate + H(+). The enzyme catalyses N(6)-(1-hydroxy-2-oxoethyl)-L-lysyl-[protein] + H2O = glycolate + L-lysyl-[protein] + H(+). It catalyses the reaction S-(1-hydroxy-2-oxoethyl)-L-cysteinyl-[protein] + H2O = glycolate + L-cysteinyl-[protein] + H(+). Functionally, deglycase that catalyzes the deglycation of the Maillard adducts formed between amino groups of proteins and reactive carbonyl groups of glyoxals. Thus, functions as a protein deglycase that repairs methylglyoxal- and glyoxal-glycated proteins, and releases repaired proteins and lactate or glycolate, respectively. Deglycates cysteine, arginine and lysine residues in proteins, and thus reactivates these proteins by reversing glycation by glyoxals. Acts on early glycation intermediates (hemithioacetals and aminocarbinols), preventing the formation of advanced glycation endproducts (AGE) that cause irreversible damage. Also displays proteolytic activity. This is Deglycase PH1704 from Pyrococcus horikoshii (strain ATCC 700860 / DSM 12428 / JCM 9974 / NBRC 100139 / OT-3).